The following is a 513-amino-acid chain: 2,3-bisphosphoglycerate-independent phosphoglycerate mutase (513 aa).

Positions 13 and 63 each coordinate Mn(2+). Serine 63 acts as the Phosphoserine intermediate in catalysis. Residues histidine 124, arginine 154–aspartate 155, arginine 186, arginine 192, arginine 262–arginine 265, and lysine 335 contribute to the substrate site. Positions 402, 406, 443, 444, and 462 each coordinate Mn(2+).

The protein belongs to the BPG-independent phosphoglycerate mutase family. In terms of assembly, monomer. Mn(2+) is required as a cofactor.

The enzyme catalyses (2R)-2-phosphoglycerate = (2R)-3-phosphoglycerate. Its pathway is carbohydrate degradation; glycolysis; pyruvate from D-glyceraldehyde 3-phosphate: step 3/5. Functionally, catalyzes the interconversion of 2-phosphoglycerate and 3-phosphoglycerate. In Photobacterium profundum (strain SS9), this protein is 2,3-bisphosphoglycerate-independent phosphoglycerate mutase.